Here is a 511-residue protein sequence, read N- to C-terminus: Ulvan-active sulfatase (511 aa).

An N-terminal signal peptide occupies residues 1–34 (MNFKQNIVYKKMAISMKITAIRPIALVISFTLLS). Cys-35 is lipidated: N-palmitoyl cysteine. Cys-35 carries S-diacylglycerol cysteine lipidation. Residues Asp-59 and Cys-99 each coordinate Ca(2+). Catalysis depends on Cys-99, which acts as the Nucleophile. A 3-oxoalanine (Cys) modification is found at Cys-99. His-149 is a catalytic residue. Position 305 (Asp-305) interacts with Ca(2+).

The protein belongs to the sulfatase family. Ca(2+) serves as cofactor. Post-translationally, the conversion to 3-oxoalanine (also known as C-formylglycine, FGly), of a serine or cysteine residue in prokaryotes and of a cysteine residue in eukaryotes, is critical for catalytic activity. This post-translational modification is severely defective in multiple sulfatase deficiency (MSD).

It is found in the cell membrane. Its function is as follows. Sulfatase involved in ulvan degradation. Ulvan is the main polysaccharide component of the Ulvales (green seaweed) cell wall. It is composed of disaccharide building blocks comprising 3-sulfated rhamnose (Rha3S) linked to D-glucuronic acid (GlcA), L-iduronic acid (IduA), or D-xylose (Xyl). The chain is Ulvan-active sulfatase from Formosa agariphila (strain DSM 15362 / KCTC 12365 / LMG 23005 / KMM 3901 / M-2Alg 35-1).